A 226-amino-acid polypeptide reads, in one-letter code: Transmembrane protein 204 (226 aa).

Residues Met1–Arg5 lie on the Cytoplasmic side of the membrane. Residues Leu6 to Phe26 traverse the membrane as a helical segment. Topologically, residues Thr27 to Asn103 are extracellular. A helical membrane pass occupies residues Leu104 to Leu124. Topologically, residues Pro125–Glu136 are cytoplasmic. The helical transmembrane segment at Ala137 to Tyr157 threads the bilayer. Residues Arg158–Tyr170 are Extracellular-facing. N-linked (GlcNAc...) asparagine glycosylation is present at Asn164. Residues Leu171–Leu191 traverse the membrane as a helical segment. Residues His192 to Cys226 lie on the Cytoplasmic side of the membrane.

Highly expressed in lung, heart, kidney and placenta. Lower expression in thymus, spleen, liver, testis and ovary. Expressed in endothelial and restricted epithelial cell populations.

The protein localises to the cell junction. Its subcellular location is the adherens junction. The protein resides in the cell membrane. In terms of biological role, can influence paracellular permeability. Appears to be involved in cell-cell interactions through adherens. The sequence is that of Transmembrane protein 204 (TMEM204) from Homo sapiens (Human).